Here is a 125-residue protein sequence, read N- to C-terminus: Large ribosomal subunit protein uL30 (125 aa).

Residues methionine 1–aspartate 61 form a large ribosomal subunit protein uL30 region. The unknown stretch occupies residues phenylalanine 62–leucine 125.

Belongs to the universal ribosomal protein uL30 family. In terms of assembly, part of the 50S ribosomal subunit.

This is Large ribosomal subunit protein uL30 from Aquifex aeolicus (strain VF5).